Here is a 312-residue protein sequence, read N- to C-terminus: Ribose-phosphate pyrophosphokinase (312 aa).

ATP-binding positions include 34–36 and 93–94; these read DQE and RQ. Residues histidine 127 and aspartate 167 each coordinate Mg(2+). The active site involves lysine 191. D-ribose 5-phosphate contacts are provided by residues arginine 193, aspartate 217, and 221 to 225; that span reads DSGGT.

The protein belongs to the ribose-phosphate pyrophosphokinase family. Class I subfamily. In terms of assembly, homohexamer. The cofactor is Mg(2+).

It is found in the cytoplasm. The enzyme catalyses D-ribose 5-phosphate + ATP = 5-phospho-alpha-D-ribose 1-diphosphate + AMP + H(+). The protein operates within metabolic intermediate biosynthesis; 5-phospho-alpha-D-ribose 1-diphosphate biosynthesis; 5-phospho-alpha-D-ribose 1-diphosphate from D-ribose 5-phosphate (route I): step 1/1. Its function is as follows. Involved in the biosynthesis of the central metabolite phospho-alpha-D-ribosyl-1-pyrophosphate (PRPP) via the transfer of pyrophosphoryl group from ATP to 1-hydroxyl of ribose-5-phosphate (Rib-5-P). The chain is Ribose-phosphate pyrophosphokinase from Hyphomonas neptunium (strain ATCC 15444).